A 37-amino-acid chain; its full sequence is Cellular retinoic acid-binding protein 2 (37 aa).

A Nuclear localization signal motif is present at residues Lys-21–Lys-31.

This sequence belongs to the calycin superfamily. Fatty-acid binding protein (FABP) family. In terms of tissue distribution, embryo.

It localises to the cytoplasm. The protein localises to the endoplasmic reticulum. Its subcellular location is the nucleus. Transports retinoic acid to the nucleus. Regulates the access of retinoic acid to the nuclear retinoic acid receptors. This Gallus gallus (Chicken) protein is Cellular retinoic acid-binding protein 2 (CRABP2).